A 692-amino-acid polypeptide reads, in one-letter code: MAREFSLENTRNIGIMAHIDAGKTTATERILYYTGRIHKIGETHEGASQMDWMEQEQERGITITSAATTAQWKGHRVNIIDTPGHVDFTVEVERSLRVLDGAVAVLDAQSGVEPQTETVWRQATTYGVPRIVFVNKMDKIGADFLYSVGTIHDRLQANAHPIQLPIGAEDEFNGIIDLVEECAYMYGNDLGTDIQRVEIPEEHKELAEEYRGKLIEAVAELDEEMMMKYLEGEEITVEELKAGIRKATTSVEFFPVICGSAFKNKGVQILLDAVIDYLPSPLDVPAIKGIVPDTDEEVERKSSDEEPFAALAFKIMTDPYVGKLTFFRVYSGVLNSGSYVKNSTKGKRERVGRILQMHANSREEISTVYAGDIAAAVGLKDTTTGDTLCDEKSLVILESMEFPEPVISVAIEPKSKADQDKMGTALSKLSEEDPTFRAHTDQETGQTIIAGMGELHLDIIVDRMRREFKVEANVGAPQVAYRETFRAAAKVEGKFARQSGGRGQFGHVWIEFEPNEEGKGFEFENKIVGGVVPREYIPAVGAGLEDALKNGVLAGYPVVDIKAALVDGSYHDVDSSEMAFKIAASMALKAAVSKCNPVILEPMMKVEVVIPEEYMGDIMGDVTSRRGRVEGMEARGNAQVVRAMVPLSEMFGYATSLRSNTQGRGTFSXVFDHYEEVPKSVSEEIIKKNKGE.

Residues glutamate 8 to leucine 282 enclose the tr-type G domain. GTP-binding positions include alanine 17–threonine 24, aspartate 81–histidine 85, and asparagine 135–aspartate 138.

It belongs to the TRAFAC class translation factor GTPase superfamily. Classic translation factor GTPase family. EF-G/EF-2 subfamily.

Its subcellular location is the cytoplasm. Catalyzes the GTP-dependent ribosomal translocation step during translation elongation. During this step, the ribosome changes from the pre-translocational (PRE) to the post-translocational (POST) state as the newly formed A-site-bound peptidyl-tRNA and P-site-bound deacylated tRNA move to the P and E sites, respectively. Catalyzes the coordinated movement of the two tRNA molecules, the mRNA and conformational changes in the ribosome. This Bacillus cereus (strain AH820) protein is Elongation factor G.